We begin with the raw amino-acid sequence, 312 residues long: Glycerol-3-phosphate dehydrogenase [NAD(P)+] (312 aa).

The NADPH site is built by W11, R30, R31, and K95. Sn-glycerol 3-phosphate contacts are provided by K95, G123, and S125. A127 lines the NADPH pocket. K177, D230, S240, R241, and N242 together coordinate sn-glycerol 3-phosphate. K177 acts as the Proton acceptor in catalysis. NADPH is bound at residue R241. Residues V265 and E267 each contribute to the NADPH site.

This sequence belongs to the NAD-dependent glycerol-3-phosphate dehydrogenase family.

It localises to the cytoplasm. The catalysed reaction is sn-glycerol 3-phosphate + NAD(+) = dihydroxyacetone phosphate + NADH + H(+). The enzyme catalyses sn-glycerol 3-phosphate + NADP(+) = dihydroxyacetone phosphate + NADPH + H(+). Its pathway is membrane lipid metabolism; glycerophospholipid metabolism. Its function is as follows. Catalyzes the reduction of the glycolytic intermediate dihydroxyacetone phosphate (DHAP) to sn-glycerol 3-phosphate (G3P), the key precursor for phospholipid synthesis. This Helicobacter pylori (strain Shi470) protein is Glycerol-3-phosphate dehydrogenase [NAD(P)+].